The sequence spans 311 residues: Serine/threonine-protein phosphatase 4 catalytic subunit A (311 aa).

4 residues coordinate Mn(2+): Asp58, His60, Asp86, and Asn118. The active-site Proton donor is the His119. Mn(2+)-binding residues include His168 and His242. Leucine methyl ester is present on Leu311.

Belongs to the PPP phosphatase family. PP-4 (PP-X) subfamily. As to quaternary structure, serine/threonine-protein phosphatase 4 (PP4) occurs in different assemblies of the catalytic and one or more regulatory subunits. Mn(2+) is required as a cofactor.

The protein resides in the cytoplasm. It is found in the cytoskeleton. It localises to the microtubule organizing center. The protein localises to the centrosome. It carries out the reaction O-phospho-L-seryl-[protein] + H2O = L-seryl-[protein] + phosphate. The catalysed reaction is O-phospho-L-threonyl-[protein] + H2O = L-threonyl-[protein] + phosphate. Functionally, protein phosphatase that regulates many processes such as microtubule organization at centrosomes. The sequence is that of Serine/threonine-protein phosphatase 4 catalytic subunit A (ppp4ca) from Danio rerio (Zebrafish).